A 540-amino-acid polypeptide reads, in one-letter code: BTB/POZ domain-containing protein 6-A (540 aa).

Positions 138 to 208 (ADVHFIVGPP…MYSDEIELAP (71 aa)) constitute a BTB domain.

Interacts with cul3. Interacts (via BTB domain) with zbtb16/plzf. As to expression, expressed in the developing central nervous system.

The protein localises to the cytoplasm. It is found in the nucleus. In terms of biological role, adapter protein for the cul3 E3 ubiquitin-protein ligase complex. Promotes the export of zbtb16/plzf from the nucleus to the cytoplasm and targets zbtb16/plzf for ubiquitination and degradation. Up-regulates neurog1 expression and antagonizes zbtb16/plzf, to promote neurogenesis. The polypeptide is BTB/POZ domain-containing protein 6-A (btbd6a) (Danio rerio (Zebrafish)).